The primary structure comprises 133 residues: Single-stranded DNA-binding protein 2 (133 aa).

The SSB domain occupies 1 to 103; sequence MNKTILIGRL…VVAEEVKFLE (103 aa).

As to quaternary structure, homotetramer.

The polypeptide is Single-stranded DNA-binding protein 2 (ssb2) (Clostridium acetobutylicum (strain ATCC 824 / DSM 792 / JCM 1419 / IAM 19013 / LMG 5710 / NBRC 13948 / NRRL B-527 / VKM B-1787 / 2291 / W)).